The following is a 274-amino-acid chain: MQQLQNIIETAFERRAEITPANADTVTREAVNQVISLLDSGALRVAEKIDGQWVTHQWLKKAVLLSFRINDNQVIEGAESRYFDKVPMKFADYDEARFQKEGFRVVPPAAVRQGAFIARNTVLMPSYVNIGAYVDEGTMVDTWATVGSCAQIGKNVHLSGGVGIGGVLEPLQANPTIIEDNCFIGARSEVVEGVIVEEGSVISMGVYIGQSTRIYDRETGEIHYGRVPAGSVVVSGNLPSKDGKYSLYCAVIVKKVDAKTRGKVGINELLRTID.

The protein belongs to the transferase hexapeptide repeat family.

It localises to the cytoplasm. It catalyses the reaction (S)-2,3,4,5-tetrahydrodipicolinate + succinyl-CoA + H2O = (S)-2-succinylamino-6-oxoheptanedioate + CoA. The protein operates within amino-acid biosynthesis; L-lysine biosynthesis via DAP pathway; LL-2,6-diaminopimelate from (S)-tetrahydrodipicolinate (succinylase route): step 1/3. The chain is 2,3,4,5-tetrahydropyridine-2,6-dicarboxylate N-succinyltransferase from Shigella boydii serotype 18 (strain CDC 3083-94 / BS512).